A 265-amino-acid polypeptide reads, in one-letter code: Cell adhesion molecule CEACAM10 (265 aa).

The N-terminal stretch at 1 to 33 (MELASAHLHKGQVPWVGLLLTASLLTYWSPATT) is a signal peptide. Ig-like V-type domains follow at residues 35 to 142 (QVTV…HVHP) and 155 to 262 (QVTV…NVHA). N-linked (GlcNAc...) asparagine glycosylation is found at Asn44, Asn87, and Asn224.

Belongs to the immunoglobulin superfamily. CEA family. As to expression, abundant in seminal vesicle and traces in epididymis and prostate (at protein level). Highly expressed in seminal vesicle, minor in colon and placenta and, to a lesser extent, in small intestine, caecum, stomach, salivary gland and bone marrow.

Its subcellular location is the secreted. It is found in the extracellular space. Functionally, may interact with other CEACAM proteins on the sperm surface. This is Cell adhesion molecule CEACAM10 from Mus musculus (Mouse).